Consider the following 116-residue polypeptide: Protein Wnt-5(III) (116 aa).

Ser-1 carries the O-palmitoleoyl serine; by PORCN lipid modification. N-linked (GlcNAc...) asparagine glycosylation occurs at Asn-69. The cysteines at positions 82 and 97 are disulfide-linked.

Belongs to the Wnt family. In terms of processing, palmitoleoylation is required for efficient binding to frizzled receptors. Depalmitoleoylation leads to Wnt signaling pathway inhibition.

The protein resides in the secreted. The protein localises to the extracellular space. Its subcellular location is the extracellular matrix. Functionally, ligand for members of the frizzled family of seven transmembrane receptors. Probable developmental protein. May be a signaling molecule which affects the development of discrete regions of tissues. Is likely to signal over only few cell diameters. The chain is Protein Wnt-5(III) (WNT-5(III)) from Eptatretus stoutii (Pacific hagfish).